A 96-amino-acid polypeptide reads, in one-letter code: Small ribosomal subunit protein bS6 (96 aa).

This sequence belongs to the bacterial ribosomal protein bS6 family.

Functionally, binds together with bS18 to 16S ribosomal RNA. This chain is Small ribosomal subunit protein bS6, found in Heliobacterium modesticaldum (strain ATCC 51547 / Ice1).